A 512-amino-acid polypeptide reads, in one-letter code: mRNA export factor (512 aa).

The interval 1–242 is disordered; sequence MATDIDMLID…PVPERKAPSA (242 aa). The short motif at 5–17 is the Nuclear export signal element; it reads IDMLIDLGLDLSD. A phosphoserine; by host mark is found at Ser16 and Ser18. 2 stretches are compositionally biased toward acidic residues: residues 16 to 28 and 36 to 55; these read SDSELEEDALERD and PESDSSGECSSSDEDMEDPC. Residues 104-112 are interaction with host ALYREF; sequence VWSRLGTRR. The short motif at 110–138 is the Nuclear localization signal element; the sequence is TRRSASPREPHGGKVARIQPPSTKAPHPR. At Ser113 the chain carries Phosphoserine; by host. Residues 135–149 show a composition bias toward basic residues; the sequence is PHPRGGRRGRRRGRG. At Arg138 the chain carries Dimethylated arginine; by host. An RGG-box region spans residues 138–152; sequence RGGRRGRRRGRGRYG. Arg148 is modified (omega-N-methylarginine; by host). At Arg150 the chain carries Dimethylated arginine; by host. Positions 228–240 are enriched in basic and acidic residues; the sequence is ADGRAPVPERKAP. Residues Cys400, His479, Cys483, and Cys488 each coordinate Zn(2+). Residues 400–488 form a CHC2-type zinc finger; sequence CYLKARGLCG…HRQECSSRVC (89 aa).

The protein belongs to the HHV-1 ICP27 protein family. In terms of assembly, interacts with host RBP1; this interaction facilitates the RNA polymerase recruitment to viral transcription sites. Interacts (via the RGG box) with host ALYREF/THOC4; this interaction recruits ALYREF to viral replication compartments and probably directs viral mRNA to the TAP/NFX1 pathway. Interacts (via the RGG box) with host SRPK1; this interaction relocalizes SRPK1 to the nucleus and seems to alter its activity. Interacts with ICP4; this interaction modulates ICP4 DNA-binding activity. Interacts with host NXF1; this interaction allows efficient export of HSV-1 early and late transcripts. Interacts with host IRF3; this interaction inhibits IRF3 phosphorylation and nuclear translocation. In terms of processing, methylated within the RGG box possibly by host PRMT1. When hypomethylated, ICP27 is exported to the cytoplasm earlier and more rapidly. Phosphorylated.

The protein localises to the host cytoplasm. It localises to the host nucleus. Functionally, multifunctional regulator of the expression of viral genes that contributes to the shutoff of host protein synthesis and mediates nuclear export of viral intronless mRNAs. Also stimulates translation of viral transcripts. Independently, plays a role in the regulation of virion release. Also plays a role in the inhibition of host innate immune response by targeting host IRF3 and thereby preventing production of beta-interferon. Silences the 3' splice site of the host promyelocytic leukemia (PML) intron 7a, thereby switching PML isoforms from PML-II to PML-V. This could be linked to the accelerated mRNA export induced by ICP27 which might not provide sufficient time for PML pre-mRNA to be spliced in the nucleus. Also suppresses splicing of the viral ICP34.5 mRNA, allowing the virus to express a variant form of ICP34.5. In Human herpesvirus 2 (strain HG52) (HHV-2), this protein is mRNA export factor.